The primary structure comprises 113 residues: UPF0122 protein M6_Spy0905 (113 aa).

This sequence belongs to the UPF0122 family.

Might take part in the signal recognition particle (SRP) pathway. This is inferred from the conservation of its genetic proximity to ftsY/ffh. May be a regulatory protein. The sequence is that of UPF0122 protein M6_Spy0905 from Streptococcus pyogenes serotype M6 (strain ATCC BAA-946 / MGAS10394).